The following is a 485-amino-acid chain: MYKMNICNKPSNKTAPEKSVWTAPAQPSGPSPELQGQRSRRNGWSWPPHPLQIVAWLLYLFFAVIGFGILVPLLPHHWVPAGYACMGAIFAGHLVVHLTAVSIDPADANVRDKSYAGPLPIFNRSQHAHVIEDLHCNLCNVDVSARSKHCSACNKCVCGFDHHCKWLNNCVGERNYRLFLHSVASALLGVLLLVLVATYVFVEFFVNPMRLRTNRHFEVLKNHTDVWFVFLPAAPVETQAPAILALAALLILLGLLSTALLGHLLCFHIYLMWHKLTTYEYIVQHRPPQEAKGVHRELESCPPKMRPIQEMEFYMRTFRHMRPEPPGQAGPAAVNAKHSRPASPDPTPGRRDCAGPPVQVEWDRKKPLPWRSPLLLLAMWGPQAPPCLCRKRGRGACIKCERLRPRIRRRGLGPPAAAPARRRIPRTPALCTPLALPAPTTRRRQSPWTRFQWRRRAWAAPLWPPRGAGADSPRWRGRRVRPPFS.

Positions 1-41 (MYKMNICNKPSNKTAPEKSVWTAPAQPSGPSPELQGQRSRR) are disordered. Over 1–52 (MYKMNICNKPSNKTAPEKSVWTAPAQPSGPSPELQGQRSRRNGWSWPPHPLQ) the chain is Cytoplasmic. The mediates interaction with STING1 stretch occupies residues 1-271 (MYKMNICNKP…GHLLCFHIYL (271 aa)). The helical transmembrane segment at 53 to 73 (IVAWLLYLFFAVIGFGILVPL) threads the bilayer. Over 74 to 77 (LPHH) the chain is Lumenal. Residues 78–98 (WVPAGYACMGAIFAGHLVVHL) form a helical membrane-spanning segment. Over 99–185 (TAVSIDPADA…YRLFLHSVAS (87 aa)) the chain is Cytoplasmic. Residues 134-184 (LHCNLCNVDVSARSKHCSACNKCVCGFDHHCKWLNNCVGERNYRLFLHSVA) enclose the DHHC domain. Cys164 serves as the catalytic S-palmitoyl cysteine intermediate. A helical transmembrane segment spans residues 186 to 206 (ALLGVLLLVLVATYVFVEFFV). Topologically, residues 207–241 (NPMRLRTNRHFEVLKNHTDVWFVFLPAAPVETQAP) are lumenal. The helical transmembrane segment at 242-262 (AILALAALLILLGLLSTALLG) threads the bilayer. Residues 263–485 (HLLCFHIYLM…RGRRVRPPFS (223 aa)) are Cytoplasmic-facing. 2 disordered regions span residues 324–358 (EPPGQAGPAAVNAKHSRPASPDPTPGRRDCAGPPV) and 462–485 (LWPPRGAGADSPRWRGRRVRPPFS). Over residues 475–485 (WRGRRVRPPFS) the composition is skewed to basic residues.

The protein belongs to the DHHC palmitoyltransferase family. Interacts with STING1; ZDHHC1 constitutively interacts with STING1 and in presence of DNA viruses activates it by promoting its cGAMP-induced oligomerization and the recruitment of downstream signaling components. Widely expressed with significant expression in heart, brain, placenta, lung, liver, kidney, testis, thymus and small intestine. Expressed at lower levels in adult pancreas and lung.

It localises to the endosome membrane. Its subcellular location is the endoplasmic reticulum membrane. The protein localises to the golgi apparatus. The catalysed reaction is L-cysteinyl-[protein] + hexadecanoyl-CoA = S-hexadecanoyl-L-cysteinyl-[protein] + CoA. In terms of biological role, palmitoyltransferase that catalyzes the addition of palmitate onto various protein substrates, such as NCDN and NLRP3. Has a palmitoyltransferase activity toward NCDN and regulates NCDN association with endosome membranes through this palmitoylation. Acts as an activator of the NLRP3 inflammasome by mediating palmitoylation of 'Cys-130' and 'Cys-958' of NLRP3, thereby promoting NLRP3 phosphorylation and activation by NEK7. Its function is as follows. Also has a palmitoyltransferase activity-independent function in DNA virus-triggered and CGAS-mediated innate immune response. Functions as an activator of STING1 by promoting its cGAMP-induced oligomerization and the recruitment of downstream signaling components. This is Palmitoyltransferase ZDHHC1 from Homo sapiens (Human).